The sequence spans 442 residues: Trigger factor (442 aa).

The PPIase FKBP-type domain maps to G176–P259.

It belongs to the FKBP-type PPIase family. Tig subfamily.

The protein resides in the cytoplasm. It carries out the reaction [protein]-peptidylproline (omega=180) = [protein]-peptidylproline (omega=0). Its function is as follows. Involved in protein export. Acts as a chaperone by maintaining the newly synthesized protein in an open conformation. Functions as a peptidyl-prolyl cis-trans isomerase. In Chlamydia trachomatis serovar A (strain ATCC VR-571B / DSM 19440 / HAR-13), this protein is Trigger factor.